The primary structure comprises 117 residues: UPF0342 protein BLi01058/BL02870 (117 aa).

This sequence belongs to the UPF0342 family.

This Bacillus licheniformis (strain ATCC 14580 / DSM 13 / JCM 2505 / CCUG 7422 / NBRC 12200 / NCIMB 9375 / NCTC 10341 / NRRL NRS-1264 / Gibson 46) protein is UPF0342 protein BLi01058/BL02870.